The following is a 53-amino-acid chain: Serine rich endogenous peptide 3 (53 aa).

An N-terminal signal peptide occupies residues 1 to 26; that stretch reads MTKKGPLNLRLLLLLLVVLLPSCSNC. An SCOOP motif motif is present at residues 37-53; it reads SSEWRRKMITVWSKSSY. Residues 49–51 carry the SxS motif essential for MIK2 binding motif; that stretch reads SKS.

The protein belongs to the serine rich endogenous peptide (SCOOP) phytocytokine family. Interacts with MIK2 (via extracellular leucine-rich repeat domain); this interaction triggers the formation of complex between MIK2 and the BAK1/SERK3 and SERK4 coreceptors, and subsequent BAK1 activation by phosphorylation.

It is found in the cell membrane. The protein localises to the secreted. Its subcellular location is the extracellular space. The protein resides in the apoplast. Its function is as follows. Brassicaceae-specific phytocytokine (plant endogenous peptide released into the apoplast) perceived by MIK2 in a BAK1/SERK3 and SERK4 coreceptors-dependent manner, that modulates various physiological and antimicrobial processes including growth prevention and reactive oxygen species (ROS) response regulation. This is Serine rich endogenous peptide 3 from Arabidopsis thaliana (Mouse-ear cress).